The chain runs to 290 residues: Thymidylate synthase (290 aa).

DUMP contacts are provided by residues R27 and 152–153 (RR). The active-site Nucleophile is the C172. DUMP is bound by residues 192–195 (RSAD), N203, and 233–235 (HVY). Position 195 (D195) interacts with (6R)-5,10-methylene-5,6,7,8-tetrahydrofolate. A289 is a (6R)-5,10-methylene-5,6,7,8-tetrahydrofolate binding site.

Belongs to the thymidylate synthase family. As to quaternary structure, homodimer.

It carries out the reaction dUMP + (6R)-5,10-methylene-5,6,7,8-tetrahydrofolate = 7,8-dihydrofolate + dTMP. It participates in pyrimidine metabolism; dTTP biosynthesis. This is Thymidylate synthase (TS) from Ateles.